A 500-amino-acid polypeptide reads, in one-letter code: ATP synthase subunit alpha (500 aa).

Residue 169-176 (GDRQTGKT) coordinates ATP.

This sequence belongs to the ATPase alpha/beta chains family. In terms of assembly, F-type ATPases have 2 components, CF(1) - the catalytic core - and CF(0) - the membrane proton channel. CF(1) has five subunits: alpha(3), beta(3), gamma(1), delta(1), epsilon(1). CF(0) has three main subunits: a(1), b(2) and c(9-12). The alpha and beta chains form an alternating ring which encloses part of the gamma chain. CF(1) is attached to CF(0) by a central stalk formed by the gamma and epsilon chains, while a peripheral stalk is formed by the delta and b chains.

It is found in the cell inner membrane. The catalysed reaction is ATP + H2O + 4 H(+)(in) = ADP + phosphate + 5 H(+)(out). Functionally, produces ATP from ADP in the presence of a proton gradient across the membrane. The alpha chain is a regulatory subunit. This chain is ATP synthase subunit alpha, found in Fusobacterium nucleatum subsp. nucleatum (strain ATCC 25586 / DSM 15643 / BCRC 10681 / CIP 101130 / JCM 8532 / KCTC 2640 / LMG 13131 / VPI 4355).